We begin with the raw amino-acid sequence, 171 residues long: Cyclin-dependent kinase inhibitor 2A (171 aa).

The segment covering 33-42 has biased composition (basic and acidic residues); the sequence is ASMHTKHESE. A disordered region spans residues 33-52; sequence ASMHTKHESEESFSGEKLTE. 3 ANK repeats span residues 45-74, 78-106, and 111-140; these read FSGE…NPNA, FGRS…EPNT, and TLTL…RLDV.

It belongs to the CDKN2 cyclin-dependent kinase inhibitor family. As to quaternary structure, heterodimer with CDK4 or CDK6. Predominamt P16 complexes contained CDK6. Interacts with CDK4 (both 'T-172'-phosphorylated and non-phosphorylated forms); the interaction inhibits cyclin D-CDK4 kinase activity. Interacts with ISCO2. In terms of tissue distribution, expressed predominantly in lung and testis. In the testis, restricted to germ cells in the seminiferous epithelium. Not detected in premeiotic spermatogonia but high levels found in postmeiotic spermatids. In primary tumors, low levels detected in melanocytic hyperplasias. Higher levels found in non-metastatic and metastatic melanomas.

The protein resides in the cytoplasm. Its subcellular location is the nucleus. Functionally, acts as a negative regulator of the proliferation of normal cells by interacting strongly with CDK4 and CDK6. This inhibits their ability to interact with cyclins D and to phosphorylate the retinoblastoma protein. This is Cyclin-dependent kinase inhibitor 2A from Monodelphis domestica (Gray short-tailed opossum).